Reading from the N-terminus, the 265-residue chain is MIKWPWKVQESAHQTALPWQEALSIPLLTCLTEQEQSKLVALAERFLQQKRLVPLQGFELNSLRSCRIALLFCLPVLKLGLEWLDGFHEVLIYPAPFVVDDEWEDDVGLVHNQRIVQSGQSWQQGPIVLNWLDIQDSFDASGFNLIIHEVAHKLDTRNGDRASGVPFISLREVAGWEHDLHAAMNNIQEEIELVGENAASIDAYAASDPAECFAVLSEYFFSAPELFAPRFPSLWQRFCQFYQQDPLQRLHHANDTDSFSATNVH.

Residues His111, His148, His152, and Glu211 each contribute to the Zn(2+) site.

Belongs to the MtfA family. In terms of assembly, interacts with Mlc. It depends on Zn(2+) as a cofactor.

Its subcellular location is the cytoplasm. Its function is as follows. Involved in the modulation of the activity of the glucose-phosphotransferase system (glucose-PTS). Interacts with the transcriptional repressor Mlc, preventing its interaction with DNA and leading to the modulation of expression of genes regulated by Mlc, including ptsG, which encodes the PTS system glucose-specific EIICB component. Functionally, shows zinc-dependent metallopeptidase activity. The chain is Mlc titration factor A from Escherichia coli O127:H6 (strain E2348/69 / EPEC).